The chain runs to 360 residues: Phenylalanine--tRNA ligase alpha subunit (360 aa).

Glu260 is a Mg(2+) binding site.

This sequence belongs to the class-II aminoacyl-tRNA synthetase family. Phe-tRNA synthetase alpha subunit type 1 subfamily. Tetramer of two alpha and two beta subunits. It depends on Mg(2+) as a cofactor.

The protein localises to the cytoplasm. The catalysed reaction is tRNA(Phe) + L-phenylalanine + ATP = L-phenylalanyl-tRNA(Phe) + AMP + diphosphate + H(+). The sequence is that of Phenylalanine--tRNA ligase alpha subunit from Methylobacterium radiotolerans (strain ATCC 27329 / DSM 1819 / JCM 2831 / NBRC 15690 / NCIMB 10815 / 0-1).